The primary structure comprises 229 residues: Uracil-DNA glycosylase (229 aa).

Catalysis depends on aspartate 65, which acts as the Proton acceptor.

This sequence belongs to the uracil-DNA glycosylase (UDG) superfamily. UNG family.

It localises to the cytoplasm. It carries out the reaction Hydrolyzes single-stranded DNA or mismatched double-stranded DNA and polynucleotides, releasing free uracil.. Excises uracil residues from the DNA which can arise as a result of misincorporation of dUMP residues by DNA polymerase or due to deamination of cytosine. The sequence is that of Uracil-DNA glycosylase from Latilactobacillus sakei subsp. sakei (strain 23K) (Lactobacillus sakei subsp. sakei).